A 221-amino-acid chain; its full sequence is UPF0758 protein Ent638_0101 (221 aa).

The MPN domain occupies 99–221 (PLLSPEMTKD…YVSFAEQGWI (123 aa)). Zn(2+)-binding residues include histidine 170, histidine 172, and aspartate 183. The JAMM motif motif lies at 170–183 (HNHPSGCAEPSKAD).

Belongs to the UPF0758 family. YicR subfamily.

The sequence is that of UPF0758 protein Ent638_0101 from Enterobacter sp. (strain 638).